Reading from the N-terminus, the 505-residue chain is Lysine--tRNA ligase (505 aa).

Glu-415 and Glu-422 together coordinate Mg(2+).

The protein belongs to the class-II aminoacyl-tRNA synthetase family. As to quaternary structure, homodimer. Mg(2+) serves as cofactor.

It is found in the cytoplasm. It catalyses the reaction tRNA(Lys) + L-lysine + ATP = L-lysyl-tRNA(Lys) + AMP + diphosphate. The polypeptide is Lysine--tRNA ligase (Xanthomonas campestris pv. campestris (strain 8004)).